The following is a 141-amino-acid chain: Lutropin subunit beta (141 aa).

Residues 1-20 (MEMLQGLLLWLLLSVAGVWA) form the signal peptide. Ser-21 carries the blocked amino end (Ser) modification. 6 disulfides stabilise this stretch: Cys-29-Cys-77, Cys-43-Cys-92, Cys-46-Cys-130, Cys-54-Cys-108, Cys-58-Cys-110, and Cys-113-Cys-120. The N-linked (GlcNAc...) asparagine glycan is linked to Asn-33.

The protein belongs to the glycoprotein hormones subunit beta family. Heterodimer of a common alpha chain and a unique beta chain which confers biological specificity to thyrotropin, lutropin, follitropin and gonadotropin.

Its subcellular location is the secreted. In terms of biological role, promotes spermatogenesis and ovulation by stimulating the testes and ovaries to synthesize steroids. This Sus scrofa (Pig) protein is Lutropin subunit beta (LHB).